The primary structure comprises 411 residues: Dihydrolipoyllysine-residue succinyltransferase component of 2-oxoglutarate dehydrogenase complex (411 aa).

The region spanning 2 to 77 (TTEIRVPTLG…EVNALLGAVE (76 aa)) is the Lipoyl-binding domain. Residue K43 is modified to N6-lipoyllysine. Positions 82–100 (SVAKSPSSSETSVSAAPSE) are enriched in low complexity. The interval 82 to 115 (SVAKSPSSSETSVSAAPSELEQSSSSNTMPPAPS) is disordered. Residues 101–110 (LEQSSSSNTM) show a composition bias toward polar residues. The region spanning 111–148 (PPAPSAAKLMAENNIAKSDILGSGKRGQILKEDVLNVL) is the Peripheral subunit-binding (PSBD) domain. Residues H382 and D386 contribute to the active site.

The protein belongs to the 2-oxoacid dehydrogenase family. In terms of assembly, forms a 24-polypeptide structural core with octahedral symmetry. Part of the 2-oxoglutarate dehydrogenase (OGDH) complex composed of E1 (2-oxoglutarate dehydrogenase), E2 (dihydrolipoamide succinyltransferase) and E3 (dihydrolipoamide dehydrogenase); the complex contains multiple copies of the three enzymatic components (E1, E2 and E3). (R)-lipoate is required as a cofactor.

It catalyses the reaction N(6)-[(R)-dihydrolipoyl]-L-lysyl-[protein] + succinyl-CoA = N(6)-[(R)-S(8)-succinyldihydrolipoyl]-L-lysyl-[protein] + CoA. It functions in the pathway amino-acid degradation; L-lysine degradation via saccharopine pathway; glutaryl-CoA from L-lysine: step 6/6. Its function is as follows. E2 component of the 2-oxoglutarate dehydrogenase (OGDH) complex which catalyzes the second step in the conversion of 2-oxoglutarate to succinyl-CoA and CO(2). This is Dihydrolipoyllysine-residue succinyltransferase component of 2-oxoglutarate dehydrogenase complex (sucB) from Bartonella vinsonii subsp. berkhoffii.